Reading from the N-terminus, the 284-residue chain is Bifunctional protein FolD (284 aa).

Residues G165–S167, I190, and I231 each bind NADP(+).

Belongs to the tetrahydrofolate dehydrogenase/cyclohydrolase family. As to quaternary structure, homodimer.

It carries out the reaction (6R)-5,10-methylene-5,6,7,8-tetrahydrofolate + NADP(+) = (6R)-5,10-methenyltetrahydrofolate + NADPH. The catalysed reaction is (6R)-5,10-methenyltetrahydrofolate + H2O = (6R)-10-formyltetrahydrofolate + H(+). Its pathway is one-carbon metabolism; tetrahydrofolate interconversion. In terms of biological role, catalyzes the oxidation of 5,10-methylenetetrahydrofolate to 5,10-methenyltetrahydrofolate and then the hydrolysis of 5,10-methenyltetrahydrofolate to 10-formyltetrahydrofolate. The sequence is that of Bifunctional protein FolD from Alkaliphilus metalliredigens (strain QYMF).